A 361-amino-acid chain; its full sequence is Trehalose 6-phosphate phosphatase RA3 (361 aa).

This sequence belongs to the trehalose phosphatase family. A divalent metal cation serves as cofactor. In terms of tissue distribution, expressed in axillary inflorescence meristems.

The enzyme catalyses alpha,alpha-trehalose 6-phosphate + H2O = alpha,alpha-trehalose + phosphate. The protein operates within glycan biosynthesis; trehalose biosynthesis. Functionally, removes the phosphate from trehalose 6-phosphate to produce free trehalose. Is specific for trehalose 6-phosphate. Does not possess activity toward glucose, sucrose or fructose 6-phosphates. Regulates inflorescence branching. Required to establish the correct identity and determinacy of axillary meristems in both male and female inflorescences. May act through a sugar signal that moves into axillary meristems. Acts upstream of RA1. May have a transcriptional regulatory function. The protein is Trehalose 6-phosphate phosphatase RA3 of Zea mays (Maize).